Here is a 749-residue protein sequence, read N- to C-terminus: Taperin (749 aa).

Residues 144–348 (PAAPCRRGSP…IRPSSKPDME (205 aa)) form a disordered region. 3 stretches are compositionally biased toward polar residues: residues 169 to 179 (SAATRTPTNRS), 230 to 239 (LQKTGSNSFT), and 250 to 266 (VNRSLSNGPMTQESPTG). Phosphoserine is present on Ser-274. Over residues 323-335 (QRQWVSSATSAND) the composition is skewed to polar residues. Basic and acidic residues predominate over residues 337 to 347 (FEIRPSSKPDM). Phosphoserine occurs at positions 401, 457, and 501. Disordered stretches follow at residues 502–586 (EEEA…TTLE), 636–673 (FEYPSESSLAQEEAEEEEEEEGEEDGEEEEVGPDSEKP), and 730–749 (LTPASQNDLSDFRSEPALYF). 2 stretches are compositionally biased toward polar residues: residues 534 to 544 (ELLNRGSNTFT) and 558 to 570 (HLSQTNGQSQQGA). Over residues 647–668 (EEAEEEEEEEGEEDGEEEEVGP) the composition is skewed to acidic residues.

Belongs to the taperin family. In terms of assembly, interacts with GRXCR2; the interaction restricts TPRN to the stereocilum basal region. Interacts with actin ACTB; the interaction may stabilize stereocilia. Interacts with CLIC5. Interacts with PTPRQ. TPRN, CLIC5 and PTPQR form concentric rings at the base of stereocilia and may form a complex. Interacts with phosphatase PPP1CA; the interaction results in inhibition of PPP1CA phosphatase activity. Interacts with DNA damage response proteins XRCC6/KU70, XRCC5/KU80, PARP1, TOP1 and TOP2A; these interactions recruit TPRN to sites of DNA damage where it may play a role in DNA repair. As to expression, in the organ of Corti, expressed in the inner ear hair cell stereocilia and the supporting cells (at protein level). Expressed in the sensory epithelia of the organ of Corti and vestibular end organs and, to a lesser extent, in Reisner's membrane and the spiral ligament (at protein level). At postnatal day 2, expression is detected in cochlea, liver, brain, kidney, heart and lung.

It is found in the cell projection. Its subcellular location is the stereocilium. The protein resides in the microvillus. It localises to the nucleus. The protein localises to the nucleoplasm. It is found in the cytoplasm. Essential for hearing. Required for maintenance of stereocilia on both inner and outer hair cells. Necessary for the integrity of the stereociliary rootlet. May act as an actin cytoskeleton regulator involved in the regulation of actin dynamics at the pointed end in hair cells. Forms rings at the base of stereocilia and binds actin filaments in the stereocilia which may stabilize the stereocilia. Acts as a strong inhibitor of PPP1CA phosphatase activity. Recruited to sites of DNA damage and may play a role in DNA damage repair. This chain is Taperin (Tprn), found in Mus musculus (Mouse).